The following is a 294-amino-acid chain: Glycine--tRNA ligase alpha subunit (294 aa).

The protein belongs to the class-II aminoacyl-tRNA synthetase family. In terms of assembly, tetramer of two alpha and two beta subunits.

The protein resides in the cytoplasm. It carries out the reaction tRNA(Gly) + glycine + ATP = glycyl-tRNA(Gly) + AMP + diphosphate. This chain is Glycine--tRNA ligase alpha subunit, found in Nostoc sp. (strain PCC 7120 / SAG 25.82 / UTEX 2576).